Here is a 291-residue protein sequence, read N- to C-terminus: Pyridoxal 5'-phosphate synthase subunit PdxS (291 aa).

Residue Asp-23 coordinates D-ribose 5-phosphate. Lys-80 acts as the Schiff-base intermediate with D-ribose 5-phosphate in catalysis. Gly-152 contacts D-ribose 5-phosphate. Arg-164 is a binding site for D-glyceraldehyde 3-phosphate. Residues Gly-213 and 234–235 (GS) each bind D-ribose 5-phosphate.

This sequence belongs to the PdxS/SNZ family. In the presence of PdxT, forms a dodecamer of heterodimers.

The catalysed reaction is aldehydo-D-ribose 5-phosphate + D-glyceraldehyde 3-phosphate + L-glutamine = pyridoxal 5'-phosphate + L-glutamate + phosphate + 3 H2O + H(+). It participates in cofactor biosynthesis; pyridoxal 5'-phosphate biosynthesis. Functionally, catalyzes the formation of pyridoxal 5'-phosphate from ribose 5-phosphate (RBP), glyceraldehyde 3-phosphate (G3P) and ammonia. The ammonia is provided by the PdxT subunit. Can also use ribulose 5-phosphate and dihydroxyacetone phosphate as substrates, resulting from enzyme-catalyzed isomerization of RBP and G3P, respectively. This Haemophilus influenzae (strain ATCC 51907 / DSM 11121 / KW20 / Rd) protein is Pyridoxal 5'-phosphate synthase subunit PdxS.